The following is a 542-amino-acid chain: E3 ubiquitin-protein ligase RNF217 (542 aa).

Disordered stretches follow at residues 1–140 (MGEE…TRVG) and 176–216 (APAS…TDSL). Residues 37-50 (SARAPPLRAASAEP) are compositionally biased toward low complexity. Residues 122–132 (DEQQEAPPGEE) are compositionally biased toward acidic residues. The span at 185–196 (PASPPGAPPVLN) shows a compositional bias: pro residues. Residues 197 to 213 (PPSTRSSFPSPRLSLPT) are compositionally biased toward low complexity. A TRIAD supradomain region spans residues 259–478 (MVLMCRVCLE…LSIFGCKYRY (220 aa)). 10 residues coordinate Zn(2+): Cys-263, Cys-266, Cys-283, Cys-286, Cys-383, Cys-386, His-391, Cys-396, Cys-423, and Cys-426. The segment at 263-309 (CRVCLEDKPIKPLPCCKKAVCEECLKVYLSAQVQLGQVEIKCPITEC) adopts an RING-type 1 zinc-finger fold. Residues 328 to 396 (IKYKYFLELG…HSPWHEGVNC (69 aa)) form an IBR-type zinc finger. The RING-type 2; atypical zinc-finger motif lies at 423-452 (CPKCKIHIQRTEGCDHMTCSQCNTNFCYRC). The active site involves Cys-436. Residues Cys-441, Cys-444, Cys-449, Cys-452, His-465, and Cys-474 each coordinate Zn(2+). A helical membrane pass occupies residues 503–523 (LIMVLGLALGAIAVVIGLFVF).

It belongs to the RBR family. RNF217 subfamily. Interacts with HAX1. In terms of tissue distribution, mainly expressed in testis and skeletal muscle.

It localises to the membrane. It is found in the cytoplasm. It carries out the reaction [E2 ubiquitin-conjugating enzyme]-S-ubiquitinyl-L-cysteine + [acceptor protein]-L-lysine = [E2 ubiquitin-conjugating enzyme]-L-cysteine + [acceptor protein]-N(6)-ubiquitinyl-L-lysine.. The protein operates within protein modification; protein ubiquitination. Its function is as follows. E3 ubiquitin-protein ligase which accepts ubiquitin from E2 ubiquitin-conjugating enzymes in the form of a thioester and then directly transfers the ubiquitin to targeted substrates. Mediates the degradation of the iron exporter ferroportin/SLC40A1 and thus regulates iron homeostasis. This chain is E3 ubiquitin-protein ligase RNF217 (RNF217), found in Homo sapiens (Human).